Consider the following 36-residue polypeptide: Neurotoxin PRTx26An0C3 (36 aa).

Intrachain disulfides connect Cys-3-Cys-17, Cys-10-Cys-22, and Cys-16-Cys-34.

Expressed by the venom gland.

It is found in the secreted. Neurotoxin. Causes spastic paralysis and death in mice. Moderate inhibitor of L-type calcium channels (Cav1/CACNA1). This is Neurotoxin PRTx26An0C3 from Phoneutria nigriventer (Brazilian armed spider).